Here is a 177-residue protein sequence, read N- to C-terminus: UBA-like domain-containing protein 1 (177 aa).

The tract at residues 89–177 is disordered; sequence ESFHSGGSGS…RAHPAMEAER (89 aa). Residues 112–138 are compositionally biased toward low complexity; it reads PHAATSSSAASSWPTAASPPGGPQHHQ. The span at 139-151 shows a compositional bias: pro residues; sequence PQPPLWTPTPPSP. The segment covering 167-177 has biased composition (basic and acidic residues); that stretch reads PRAHPAMEAER.

This sequence belongs to the UBALD family.

The chain is UBA-like domain-containing protein 1 (UBALD1) from Homo sapiens (Human).